The primary structure comprises 286 residues: MTKVITTINEMQSIVKQHQREGKTIGFVPTMGALHDGHLTMMKQSVSENDLTVISIFVNPLQFGPNEDFDAYPRQLDDDVAAVKKLQVDYVFHPSVDEMYPEELGIHLKVGHLAQVLEGAQRPGHFEGVVTVVNKLFNIVQPDYAYFGKKDAQQLAIVEKMVKDFNLPVHVIGIDIVREKDGLAKSSRNIYLTSEERKEAKHLYQSLRLAKNLYEAGERDSNEIIGQIAAYLNKNISGHIDDLGIYSYPNLIQQSKIHGRIFISLAVKFSKARLIDNIIIGDDYID.

ATP is bound at residue Met-31–His-38. Residue His-38 is the Proton donor of the active site. Residue Gln-62 participates in (R)-pantoate binding. Residue Gln-62 participates in beta-alanine binding. Gly-148–Asp-151 is a binding site for ATP. Residue Gln-154 participates in (R)-pantoate binding. Residues Val-177 and Lys-185–Arg-188 each bind ATP.

The protein belongs to the pantothenate synthetase family. In terms of assembly, homodimer.

It localises to the cytoplasm. It carries out the reaction (R)-pantoate + beta-alanine + ATP = (R)-pantothenate + AMP + diphosphate + H(+). It participates in cofactor biosynthesis; (R)-pantothenate biosynthesis; (R)-pantothenate from (R)-pantoate and beta-alanine: step 1/1. Its function is as follows. Catalyzes the condensation of pantoate with beta-alanine in an ATP-dependent reaction via a pantoyl-adenylate intermediate. The sequence is that of Pantothenate synthetase from Staphylococcus epidermidis (strain ATCC 35984 / DSM 28319 / BCRC 17069 / CCUG 31568 / BM 3577 / RP62A).